The primary structure comprises 230 residues: Ribosomal RNA large subunit methyltransferase E (230 aa).

S-adenosyl-L-methionine-binding residues include Gly76, Trp78, Asp99, Asp115, and Asp139. Lys179 functions as the Proton acceptor in the catalytic mechanism.

This sequence belongs to the class I-like SAM-binding methyltransferase superfamily. RNA methyltransferase RlmE family.

It localises to the cytoplasm. The enzyme catalyses uridine(2552) in 23S rRNA + S-adenosyl-L-methionine = 2'-O-methyluridine(2552) in 23S rRNA + S-adenosyl-L-homocysteine + H(+). Specifically methylates the uridine in position 2552 of 23S rRNA at the 2'-O position of the ribose in the fully assembled 50S ribosomal subunit. In Nitrobacter winogradskyi (strain ATCC 25391 / DSM 10237 / CIP 104748 / NCIMB 11846 / Nb-255), this protein is Ribosomal RNA large subunit methyltransferase E.